A 1017-amino-acid chain; its full sequence is Type VI secretion system spike protein VgrG3 (1017 aa).

Residue Asp842 is part of the active site.

It belongs to the VgrG protein family. In terms of assembly, interacts with TsiV3. Interacts with TseL.

The protein resides in the secreted. Functionally, part of the type VI secretion system specialized secretion system, which delivers several virulence factors in both prokaryotic and eukaryotic cells during infection. Forms the spike at the tip of the elongating tube formed by haemolysin co-regulated protein Hcp. Allows the delivery of the TseL antibacterial toxin to target cells where it exerts its toxicity. Additionally, acts directly as an effector and targets the cell wall peptidoglycan layer of prey cells for degradation via its C-terminus. Toxicity is counteracted by a cognate immunity protein TsiV3. The protein is Type VI secretion system spike protein VgrG3 of Vibrio cholerae serotype O1 (strain ATCC 39315 / El Tor Inaba N16961).